The following is a 689-amino-acid chain: Glycine--tRNA ligase beta subunit (689 aa).

This sequence belongs to the class-II aminoacyl-tRNA synthetase family. As to quaternary structure, tetramer of two alpha and two beta subunits.

It localises to the cytoplasm. It carries out the reaction tRNA(Gly) + glycine + ATP = glycyl-tRNA(Gly) + AMP + diphosphate. The chain is Glycine--tRNA ligase beta subunit from Coxiella burnetii (strain RSA 331 / Henzerling II).